Reading from the N-terminus, the 513-residue chain is ATP synthase subunit alpha (513 aa).

169–176 (GDRQTGKT) serves as a coordination point for ATP.

This sequence belongs to the ATPase alpha/beta chains family. As to quaternary structure, F-type ATPases have 2 components, CF(1) - the catalytic core - and CF(0) - the membrane proton channel. CF(1) has five subunits: alpha(3), beta(3), gamma(1), delta(1), epsilon(1). CF(0) has three main subunits: a(1), b(2) and c(9-12). The alpha and beta chains form an alternating ring which encloses part of the gamma chain. CF(1) is attached to CF(0) by a central stalk formed by the gamma and epsilon chains, while a peripheral stalk is formed by the delta and b chains.

Its subcellular location is the cell inner membrane. The enzyme catalyses ATP + H2O + 4 H(+)(in) = ADP + phosphate + 5 H(+)(out). Its function is as follows. Produces ATP from ADP in the presence of a proton gradient across the membrane. The alpha chain is a regulatory subunit. This chain is ATP synthase subunit alpha, found in Shewanella amazonensis (strain ATCC BAA-1098 / SB2B).